Consider the following 378-residue polypeptide: Ribosomal RNA large subunit methyltransferase G (378 aa).

It belongs to the methyltransferase superfamily. RlmG family.

It localises to the cytoplasm. The enzyme catalyses guanosine(1835) in 23S rRNA + S-adenosyl-L-methionine = N(2)-methylguanosine(1835) in 23S rRNA + S-adenosyl-L-homocysteine + H(+). Its function is as follows. Specifically methylates the guanine in position 1835 (m2G1835) of 23S rRNA. The polypeptide is Ribosomal RNA large subunit methyltransferase G (Citrobacter koseri (strain ATCC BAA-895 / CDC 4225-83 / SGSC4696)).